The following is a 402-amino-acid chain: Acetate kinase (402 aa).

Position 7 (asparagine 7) interacts with Mg(2+). Lysine 14 lines the ATP pocket. Arginine 95 contacts substrate. The Proton donor/acceptor role is filled by aspartate 152. ATP is bound by residues 212–216, 286–288, and 334–338; these read HLGNG, DMR, and GIGEN. Position 388 (glutamate 388) interacts with Mg(2+).

The protein belongs to the acetokinase family. As to quaternary structure, homodimer. Mg(2+) is required as a cofactor. The cofactor is Mn(2+).

The protein localises to the cytoplasm. It carries out the reaction acetate + ATP = acetyl phosphate + ADP. It participates in metabolic intermediate biosynthesis; acetyl-CoA biosynthesis; acetyl-CoA from acetate: step 1/2. Catalyzes the formation of acetyl phosphate from acetate and ATP. Can also catalyze the reverse reaction. The chain is Acetate kinase from Nitratidesulfovibrio vulgaris (strain DP4) (Desulfovibrio vulgaris).